Reading from the N-terminus, the 58-residue chain is Large ribosomal subunit protein bL32 (58 aa).

The protein belongs to the bacterial ribosomal protein bL32 family.

The chain is Large ribosomal subunit protein bL32 from Prochlorococcus marinus (strain MIT 9515).